Consider the following 483-residue polypeptide: Regulatory protein ViaA (483 aa).

This sequence belongs to the ViaA family. Homodimer. Interacts with RavA.

The protein resides in the cytoplasm. In terms of biological role, component of the RavA-ViaA chaperone complex, which may act on the membrane to optimize the function of some of the respiratory chains. ViaA stimulates the ATPase activity of RavA. This is Regulatory protein ViaA from Escherichia coli O7:K1 (strain IAI39 / ExPEC).